The sequence spans 1875 residues: Soluble starch synthase 3a, chloroplastic/amyloplastic (1875 aa).

A chloroplast-targeting transit peptide spans 1–49 (MEMALRPQSLLCPRSRLKVVIRPASSASGGGLAQYFLMTRRYTGSRIVR). Positions 1007-1065 (KRELERVATEEAERRRHAEEQQRMGEQRAAEQAAREQAKKEIELKKNKLQNLLSSARTH) form a coiled coil. The disordered stretch occupies residues 1014 to 1043 (ATEEAERRRHAEEQQRMGEQRAAEQAAREQ).

Belongs to the glycosyltransferase 1 family. Bacterial/plant glycogen synthase subfamily. Expressed in the endosperm.

The protein localises to the plastid. Its subcellular location is the chloroplast. It is found in the amyloplast. The enzyme catalyses [(1-&gt;4)-alpha-D-glucosyl](n) + ADP-alpha-D-glucose = [(1-&gt;4)-alpha-D-glucosyl](n+1) + ADP + H(+). The protein operates within glycan biosynthesis; starch biosynthesis. Involved in starch synthesis in endosperm amyloplasts. Plays an important role in the elongation of amylopectin B chains. This is Soluble starch synthase 3a, chloroplastic/amyloplastic from Oryza sativa subsp. japonica (Rice).